Here is a 236-residue protein sequence, read N- to C-terminus: tRNA1(Val) (adenine(37)-N6)-methyltransferase (236 aa).

Belongs to the methyltransferase superfamily. tRNA (adenine-N(6)-)-methyltransferase family.

The protein resides in the cytoplasm. The enzyme catalyses adenosine(37) in tRNA1(Val) + S-adenosyl-L-methionine = N(6)-methyladenosine(37) in tRNA1(Val) + S-adenosyl-L-homocysteine + H(+). In terms of biological role, specifically methylates the adenine in position 37 of tRNA(1)(Val) (anticodon cmo5UAC). This Shewanella sp. (strain MR-4) protein is tRNA1(Val) (adenine(37)-N6)-methyltransferase.